A 93-amino-acid polypeptide reads, in one-letter code: Small ribosomal subunit protein uS19c (93 aa).

Residues 73–93 (EFSPTRTFRGHTKSDKKSRRP) form a disordered region. Residues 80–93 (FRGHTKSDKKSRRP) are compositionally biased toward basic residues.

Belongs to the universal ribosomal protein uS19 family.

The protein resides in the plastid. The protein localises to the chloroplast. Functionally, protein S19 forms a complex with S13 that binds strongly to the 16S ribosomal RNA. The protein is Small ribosomal subunit protein uS19c (rps19) of Mesostigma viride (Green alga).